Reading from the N-terminus, the 210-residue chain is MSNNVEEKILHGTTTVGIKAKDGVVLCADMRASAGYFIANNNTMKIQKIDDHAGLTLAGGVADAQNIVDILRYHSNLHRVEKHGPISIHSLARLCSLIFHQNRGYPFMADILVGGYDAEGPALFNIDMFGSVEKKAYVTTGSGSPVAYGLLEEEYREDLTVEEAKKIALRAVKAAIVRNIGTGDGINIAIMDKDGFRLLTEEQKKAVIEL.

Residues 1 to 12 constitute a propeptide, removed in mature form; by autocatalysis; sequence MSNNVEEKILHG. Thr-13 serves as the catalytic Nucleophile.

Belongs to the peptidase T1B family. The 20S proteasome core is composed of 14 alpha and 14 beta subunits that assemble into four stacked heptameric rings, resulting in a barrel-shaped structure. The two inner rings, each composed of seven catalytic beta subunits, are sandwiched by two outer rings, each composed of seven alpha subunits. The catalytic chamber with the active sites is on the inside of the barrel. Has a gated structure, the ends of the cylinder being occluded by the N-termini of the alpha-subunits. Is capped at one or both ends by the proteasome regulatory ATPase, PAN.

It localises to the cytoplasm. The catalysed reaction is Cleavage of peptide bonds with very broad specificity.. The formation of the proteasomal ATPase PAN-20S proteasome complex, via the docking of the C-termini of PAN into the intersubunit pockets in the alpha-rings, triggers opening of the gate for substrate entry. Interconversion between the open-gate and close-gate conformations leads to a dynamic regulation of the 20S proteasome proteolysis activity. Its function is as follows. Component of the proteasome core, a large protease complex with broad specificity involved in protein degradation. In Nitrosopumilus maritimus (strain SCM1), this protein is Proteasome subunit beta 2.